Reading from the N-terminus, the 243-residue chain is MKMHIARDSIVFLLNKHLQNTILTNKIEQECFLQADTPKKYLQYIKPFLINCMTKNITTDLVMKDSKRLEPYIILEMRDIIQMMFFRTLQKHIFFKKHTDLCTEYAQKIEASCYHYTYQQQEKTFLEEYSTRCGTINHIINCEKKSHQQQDNDALNKLISGELKPEAIGSMTFAELCPSAALKEKTEITLRSQQKVAEKTSQLYKCPNCKQRMCTYREVQTRALDEPSTIFCTCKKCGHEFIG.

The 125-residue stretch at 77–201 folds into the TFIIS central domain; sequence MRDIIQMMFF…SQQKVAEKTS (125 aa). A TFIIS-type zinc finger spans residues 202–242; that stretch reads QLYKCPNCKQRMCTYREVQTRALDEPSTIFCTCKKCGHEFI. Residues Cys-206, Cys-209, Cys-234, and Cys-237 each contribute to the Zn(2+) site.

The protein belongs to the TFS-II family.

In terms of biological role, putative initiation factor. Necessary for efficient transcription elongation past template-encoded arresting sites. The chain is Transcription factor TFIIS homolog from Ornithodoros (relapsing fever ticks).